A 176-amino-acid chain; its full sequence is Odorant-binding protein 2a (176 aa).

A signal peptide spans 1-19 (MKSLLLTILLLGLVAVLKA). N-linked (GlcNAc...) asparagine glycans are attached at residues N42 and N124. Residues C79 and C172 are joined by a disulfide bond.

The protein belongs to the calycin superfamily. Lipocalin family. As to expression, expressed in the liver (at protein level). Expressed in epididymis.

The protein localises to the secreted. Involved in the regulation of systematic glucose homeostasis and insulin sensitivity. Involved in the regulation of liver lipid levels by positive regulation of hepatic lipogenesis and negative regulation of fatty acid beta-oxidation; via downstream transcriptional regulation of CPT1A and hepatic lipogenic program gene expression. May regulate hepatic lipogenesis and fatty acid beta-oxidation in an autocrine or paracrine manner. This Mus musculus (Mouse) protein is Odorant-binding protein 2a (Obp2a).